The primary structure comprises 847 residues: B-cell receptor CD22 (847 aa).

Residues 1 to 19 (MHLLGPWLLLLVLEYLAFS) form the signal peptide. Residues 20 to 138 (DSSKWVFEHP…MERIHLNVSE (119 aa)) enclose the Ig-like V-type domain. Residues 20–687 (DSSKWVFEHP…YYSPETIGRR (668 aa)) lie on the Extracellular side of the membrane. Disulfide bonds link C39/C167, C44/C102, and C161/C219. N-linked (GlcNAc...) asparagine glycosylation is found at N67, N101, and N112. R120 serves as a coordination point for N-acetylneuraminate. N135, N164, and N231 each carry an N-linked (GlcNAc...) asparagine glycan. Ig-like C2-type domains lie at 143 to 235 (PHIQ…DTVQ), 242 to 326 (PKLE…VFLQ), 331 to 416 (PEPS…LDVQ), 419 to 500 (PKKV…VALN), 505 to 582 (PRDV…QTAS), and 593 to 676 (PRRL…STLT). 4 cysteine pairs are disulfide-bonded: C265/C309, C353/C396, C442/C484, and C529/C571. N-linked (GlcNAc...) asparagine glycans are attached at residues N363, N445, and N479. 2 N-linked (GlcNAc...) asparagine glycosylation sites follow: N574 and N634. A disulfide bridge connects residues C616 and C659. Residues 688-706 (VAVGLGSCLAILILAICGL) traverse the membrane as a helical segment. The Cytoplasmic segment spans residues 707-847 (KLQRRWKRTQ…ENVDYVILKH (141 aa)). A phosphoserine mark is found at S725, S726, and S729. 2 short sequence motifs (ITIM motif) span residues 760-765 (ISYTTL) and 794-799 (VTYSAL). Residue Y762 is modified to Phosphotyrosine. Y807, Y822, and Y842 each carry phosphotyrosine. 2 short sequence motifs (ITIM motif) span residues 820–825 (IHYSEL) and 840–845 (VDYVIL).

It belongs to the immunoglobulin superfamily. SIGLEC (sialic acid binding Ig-like lectin) family. As to quaternary structure, predominantly monomer of isoform CD22-beta. Also found as heterodimer of isoform CD22-beta and a shorter isoform. Interacts with PTPN6/SHP-1, LYN, SYK, PIK3R1/PIK3R2 and PLCG1 upon phosphorylation. Interacts with GRB2, INPP5D and SHC1 upon phosphorylation. May form a complex with INPP5D/SHIP, GRB2 and SHC1. Phosphorylation of Tyr-762, Tyr-807 and Tyr-822 are involved in binding to SYK, GRB2 and SYK, respectively. Phosphorylation of Tyr-842 is involved in binding to SYK, PLCG2 and PIK3R1/PIK3R2. Post-translationally, phosphorylated on tyrosine residues by LYN. In terms of tissue distribution, B-lymphocytes.

It is found in the cell membrane. Functionally, most highly expressed siglec (sialic acid-binding immunoglobulin-like lectin) on B-cells that plays a role in various aspects of B-cell biology including differentiation, antigen presentation, and trafficking to bone marrow. Binds to alpha 2,6-linked sialic acid residues of surface molecules such as CD22 itself, CD45 and IgM in a cis configuration. Can also bind to ligands on other cells as an adhesion molecule in a trans configuration. Acts as an inhibitory coreceptor on the surface of B-cells and inhibits B-cell receptor induced signaling, characterized by inhibition of the calcium mobilization and cellular activation. Mechanistically, the immunoreceptor tyrosine-based inhibitory motif domain is phosphorylated by the Src kinase LYN, which in turn leads to the recruitment of the protein tyrosine phosphatase 1/PTPN6, leading to the negative regulation of BCR signaling. If this negative signaling from is of sufficient strength, apoptosis of the B-cell can be induced. This chain is B-cell receptor CD22, found in Homo sapiens (Human).